Here is a 622-residue protein sequence, read N- to C-terminus: Low affinity potassium transport system protein Kup (622 aa).

Helical transmembrane passes span 9 to 29 (LSAV…TSPL), 46 to 66 (PDVV…VVSV), 101 to 121 (ILVV…VITP), 137 to 157 (PALD…LFVI), 165 to 185 (VGKL…LLGL), 213 to 233 (VSFF…ALYA), 247 to 267 (WFTV…ALLL), 276 to 296 (PFFL…ATLA), 337 to 357 (IYIP…IIGF), 363 to 383 (LAAA…ILFC), 395 to 415 (FLVV…FSAN), and 416 to 436 (VLKL…MFII).

This sequence belongs to the HAK/KUP transporter (TC 2.A.72) family.

It localises to the cell inner membrane. It carries out the reaction K(+)(in) + H(+)(in) = K(+)(out) + H(+)(out). Responsible for the low-affinity transport of potassium into the cell. Likely operates as a K(+):H(+) symporter. This Yersinia pestis (strain Pestoides F) protein is Low affinity potassium transport system protein Kup.